Here is an 853-residue protein sequence, read N- to C-terminus: DNA mismatch repair protein MutS (853 aa).

613–620 (GPNMGGKS) provides a ligand contact to ATP.

It belongs to the DNA mismatch repair MutS family.

This protein is involved in the repair of mismatches in DNA. It is possible that it carries out the mismatch recognition step. This protein has a weak ATPase activity. The protein is DNA mismatch repair protein MutS of Vibrio vulnificus (strain YJ016).